The following is a 1581-amino-acid chain: Ankyrin repeat domain-containing protein 26 (1581 aa).

Residues 1–22 (MKKIFGFRSKGPSPLGPSARPR) are disordered. Ser-13 is modified (phosphoserine). ANK repeat units lie at residues 46–76 (KDMG…GVND), 80–109 (KDRT…EIDA), 113–142 (ESST…DPNV), 146–175 (SGNT…NIEA), and 179–208 (DDLT…SIHA). Disordered stretches follow at residues 225 to 270 (RLQR…FDNK), 299 to 343 (LDNG…PVEG), 361 to 381 (SASQ…WHKS), and 488 to 652 (VLNK…QTAA). Residues 229–250 (SENSNPVDNGSEDGSLTRSYNT) are compositionally biased toward polar residues. Ser-239 and Ser-260 each carry phosphoserine. Positions 308-319 (SDSPSESEDAIE) are enriched in acidic residues. Polar residues predominate over residues 327-337 (RVQTLSPSRQS). Basic and acidic residues predominate over residues 367 to 381 (PNHDNLTRADGWHKS). Over residues 491–504 (KTETVGMTDAQTFK) the composition is skewed to polar residues. 3 stretches are compositionally biased toward basic and acidic residues: residues 505–516 (SEPESVSREEQT), 524–538 (SQQK…KNNE), and 585–601 (KEAK…REPA). Position 511 is a phosphoserine (Ser-511). Coiled coils occupy residues 715–845 (RSHC…NARM), 876–1345 (HEKE…MVEH), 1396–1470 (RSQM…RSLL), and 1521–1550 (LTKM…FCRV).

In terms of assembly, interacts with TRIO. Interacts with GPS2. Interacts with CCDC85B. Interacts with HMMR. As to expression, widely expressed. Expressed in the arcuate and ventromedial nuclei within the hypothalamus and in the ependyma and the circumventricular organs (at protein level).

It localises to the cytoplasm. The protein localises to the cytosol. Functionally, acts as a regulator of adipogenesis. Involved in the regulation of the feeding behavior. The polypeptide is Ankyrin repeat domain-containing protein 26 (Ankrd26) (Mus musculus (Mouse)).